A 472-amino-acid polypeptide reads, in one-letter code: Trigger factor (472 aa).

The 88-residue stretch at 174–261 (GDIALVSFKG…LEDLKIKELP (88 aa)) folds into the PPIase FKBP-type domain. Positions 433–472 (NNTVVEKPPEKARDQIKEKSSKKKTTKTNKEKKSSKTPKS) are disordered. Over residues 439 to 451 (KPPEKARDQIKEK) the composition is skewed to basic and acidic residues.

It belongs to the FKBP-type PPIase family. Tig subfamily.

It is found in the cytoplasm. It catalyses the reaction [protein]-peptidylproline (omega=180) = [protein]-peptidylproline (omega=0). Its function is as follows. Involved in protein export. Acts as a chaperone by maintaining the newly synthesized protein in an open conformation. Functions as a peptidyl-prolyl cis-trans isomerase. The protein is Trigger factor of Prochlorococcus marinus (strain NATL1A).